The sequence spans 152 residues: Sulfur-rich protein (152 aa).

Residues 1-20 (MSTVPVVQGAGSSNSAQDIS) are disordered. Transmembrane regions (helical) follow at residues 43–63 (VGLV…LVSA) and 69–89 (AIYL…VGIL).

The protein resides in the membrane. This chain is Sulfur-rich protein (srp), found in Chlamydia trachomatis serovar A (strain ATCC VR-571B / DSM 19440 / HAR-13).